Here is a 1509-residue protein sequence, read N- to C-terminus: MPFRGRRRQSALRGLSLAATFCLAAGSSGISGALFATPAQADPLPTAAGLSINSANLTVEVSADFPQALSYTETSSAKHLSGARTLASSITINGTDQPVKVSSQKADAQTVNYLITPNNLAGVSLDAQLRVEGMTLTFKISKIKDTAENRVNNLQIKNQDLVTVSSQEPGATVASAVVSVDRAVSGDTITNLSSTTALDPTAKRSMLAIAATDQLAAGFETNSLYDSGNTIGPSDQGKFWRQALADGTGADGKPAVKMAVSSGAWLYRSAGSDQTEELPWSKVVISGDANADGKVDWQDGAIAYRSIESKPAGGDDVKNRVVTHIPFNFASQATHPFLRTLDDVKHIALATDGLGQMALEKGYTSEGHDSANSDFGGNFNERAGGLTDFNAMLSGGSAYGATFGVHINNTEAYPEANSFSNDFVDPTKKGWNWLDQSFYIDQQRDILSGSQQQRIDQLRSEAGPNLTMAYVDVYYESGWKSYRLQKGLKDAGFSVASEFATAMPANNTWSHWANDEKHGGSNNIKAGTQILRFVDNSQRDIWNPDPLLGTSHIVEWEGWTNQNDYNAFLKNIWGNNLPVKFLQQQQITSWKSRSVDLTGGLKVTGTSLADRVISQQGVPVLKGSNYLLPWSAAPVSFGSGAVNDTTQNKLYHYSADGGTSTWQLTPQFATASSLQIYKLTDYGRELIGSVPVVNGSVTLTAEANQAYVLVADASVTTVPADPSYGAGSKVKDPGFNSAGLKDWNATGGAAVERTAQGLLVAKLGQGSSAISQTLGSLDPGSYSIGAWVEIEPTTLTVTPAGGAPISVTVDQSGAENFVASDEKRGTYFQRLRVLVDIANAGAPQLSISAPAGEAAVRIDDVRVVKANKVPTTGILSENFENTDQGWLPFIKGDAGGQTDPRTHIAKLNAPYTQKGWNGKTTSDVLDDTYSLHSHEENQGLVYRTSNYTLPLQAGRQYRVSFDYQASLANQYTWVSGYDSGKNPVQTASTAIPVATDTTRWSQTLSAGSCGPAWVGLQRTGSSGGAEFSMDNLLVEDLGPSAETPACASLSLTSGQDVIEQGQTNTFSASFSSSEAQSIAGLSVALDLPAGWTASAATPATAATLPAGGSLETQWKVQVPADADGDYTIKAKASYQTTVDPIGSRSATTETAVYTLPKPPTKDTYASDMQWIGTPSNGWGPVEKDQANGEQAQGDGPPLKLGGVTYPKGLGAHAASSIRYYVGSQCSAFTAVIGIDDFQKLKGQAVFSVLGDGNSLYTSPVMKGGAAAQTITVPLNGAKYVDLKVAISGANNGNAWSDWANAKFLCSAPVAPITLQPTLSVPTDSLQPGSAFTVRVDQLKSGSTAKAELHSDPIDLGSVQANNDGVASFQVTLAQDAPLGNHQIVVTGTDKNGLAATGTVDAQIKAANPNPGTGSNPGTGSNPGTDPGTGSAGGNSSGGGANGSGANGTYVNGSGGSFGNGAGMDAKTGSNSASSLAETGFSGLVLPLGIGLMLLLIGAAAIIVRRHRHS.

The signal sequence occupies residues 1–41; the sequence is MPFRGRRRQSALRGLSLAATFCLAAGSSGISGALFATPAQA. Ca(2+) contacts are provided by Asp-288, Asn-290, Asp-292, Lys-294, and Asp-299. The tract at residues 313–585 is catalytic; the sequence is GGDDVKNRVV…NLPVKFLQQQ (273 aa). Substrate is bound at residue Asp-369. Asp-472 acts as the Nucleophile in catalysis. Glu-498 functions as the Proton donor/acceptor in the catalytic mechanism. Residues Asn-878, Glu-880, Asp-926, and Tyr-929 each contribute to the Ca(2+) site. Disordered stretches follow at residues 1176 to 1197 and 1403 to 1439; these read NGWG…DGPP and IKAA…SGGG. Low complexity predominate over residues 1407–1428; it reads NPNPGTGSNPGTGSNPGTDPGT. A compositionally biased stretch (gly residues) spans 1429 to 1439; it reads GSAGGNSSGGG. Positions 1475 to 1479 match the LPXTG sorting signal motif; the sequence is LAETG. The residue at position 1478 (Thr-1478) is a Pentaglycyl murein peptidoglycan amidated threonine. Positions 1479 to 1509 are cleaved as a propeptide — removed by sortase; the sequence is GFSGLVLPLGIGLMLLLIGAAAIIVRRHRHS.

The protein belongs to the glycosyl hydrolase 101 family. A subfamily.

Its subcellular location is the secreted. The protein resides in the cell wall. The enzyme catalyses a 3-O-[beta-D-galactosyl-(1-&gt;3)-N-acetyl-alpha-D-galactosaminyl]-L-threonyl-[protein] + H2O = beta-D-galactosyl-(1-&gt;3)-N-acetyl-D-galactosamine + L-threonyl-[protein]. It carries out the reaction a 3-O-[beta-D-galactosyl-(1-&gt;3)-N-acetyl-alpha-D-galactosaminyl]-L-seryl-[protein] + H2O = beta-D-galactosyl-(1-&gt;3)-N-acetyl-D-galactosamine + L-seryl-[protein]. In terms of biological role, probably involved in the breakdown of mucin-type O-linked glycans. Specifically removes the T-antigen disaccharide (Gal-beta-1,3-GalNAc-alpha) from extracellular host glycoproteins. This chain is Putative endo-alpha-N-acetylgalactosaminidase, found in Renibacterium salmoninarum (strain ATCC 33209 / DSM 20767 / JCM 11484 / NBRC 15589 / NCIMB 2235).